The sequence spans 353 residues: Photosystem II protein D1 (353 aa).

Residue threonine 2 is modified to N-acetylthreonine. Threonine 2 carries the phosphothreonine modification. 3 helical membrane passes run 29–46 (YIGWFGVLMIPTLLTATS), 118–133 (HFLLGVACYMGREWEL), and 142–156 (WIAVAYSAPVAAATA). Histidine 118 contacts chlorophyll a. A pheophytin a-binding site is contributed by tyrosine 126. Aspartate 170 and glutamate 189 together coordinate [CaMn4O5] cluster. The chain crosses the membrane as a helical span at residues 197–218 (FHMLGVAGVFGGSLFSAMHGSL). Histidine 198 serves as a coordination point for chlorophyll a. Residues histidine 215 and 264–265 (SF) each bind a quinone. Residue histidine 215 participates in Fe cation binding. Histidine 272 is a Fe cation binding site. Residues 274–288 (FLAAWPVVGIWFTAL) form a helical membrane-spanning segment. Positions 332, 333, 342, and 344 each coordinate [CaMn4O5] cluster. Positions 345 to 353 (AVEVPSING) are excised as a propeptide.

Belongs to the reaction center PufL/M/PsbA/D family. In terms of assembly, PSII is composed of 1 copy each of membrane proteins PsbA, PsbB, PsbC, PsbD, PsbE, PsbF, PsbH, PsbI, PsbJ, PsbK, PsbL, PsbM, PsbT, PsbX, PsbY, PsbZ, Psb30/Ycf12, at least 3 peripheral proteins of the oxygen-evolving complex and a large number of cofactors. It forms dimeric complexes. Requires The D1/D2 heterodimer binds P680, chlorophylls that are the primary electron donor of PSII, and subsequent electron acceptors. It shares a non-heme iron and each subunit binds pheophytin, quinone, additional chlorophylls, carotenoids and lipids. D1 provides most of the ligands for the Mn4-Ca-O5 cluster of the oxygen-evolving complex (OEC). There is also a Cl(-1) ion associated with D1 and D2, which is required for oxygen evolution. The PSII complex binds additional chlorophylls, carotenoids and specific lipids. as cofactor. Tyr-161 forms a radical intermediate that is referred to as redox-active TyrZ, YZ or Y-Z. In terms of processing, C-terminally processed by CTPA; processing is essential to allow assembly of the oxygen-evolving complex and thus photosynthetic growth.

The protein resides in the plastid. It localises to the chloroplast thylakoid membrane. It catalyses the reaction 2 a plastoquinone + 4 hnu + 2 H2O = 2 a plastoquinol + O2. Functionally, photosystem II (PSII) is a light-driven water:plastoquinone oxidoreductase that uses light energy to abstract electrons from H(2)O, generating O(2) and a proton gradient subsequently used for ATP formation. It consists of a core antenna complex that captures photons, and an electron transfer chain that converts photonic excitation into a charge separation. The D1/D2 (PsbA/PsbD) reaction center heterodimer binds P680, the primary electron donor of PSII as well as several subsequent electron acceptors. The sequence is that of Photosystem II protein D1 from Triticum aestivum (Wheat).